Here is a 605-residue protein sequence, read N- to C-terminus: UvrABC system protein C (605 aa).

Residues 13 to 92 enclose the GIY-YIG domain; the sequence is TSPGVYLMKD…IKKHHPKYNV (80 aa). A UVR domain is found at 205 to 240; that stretch reads SEIIQDLEKSIEKASQEQKFEQAGIYYRTLKLIQQA.

Belongs to the UvrC family. Interacts with UvrB in an incision complex.

The protein localises to the cytoplasm. Functionally, the UvrABC repair system catalyzes the recognition and processing of DNA lesions. UvrC both incises the 5' and 3' sides of the lesion. The N-terminal half is responsible for the 3' incision and the C-terminal half is responsible for the 5' incision. The sequence is that of UvrABC system protein C from Chlamydia caviae (strain ATCC VR-813 / DSM 19441 / 03DC25 / GPIC) (Chlamydophila caviae).